Reading from the N-terminus, the 244-residue chain is 1-(5-phosphoribosyl)-5-[(5-phosphoribosylamino)methylideneamino] imidazole-4-carboxamide isomerase (244 aa).

The Proton acceptor role is filled by D8. The active-site Proton donor is the D129.

The protein belongs to the HisA/HisF family.

The protein resides in the cytoplasm. The enzyme catalyses 1-(5-phospho-beta-D-ribosyl)-5-[(5-phospho-beta-D-ribosylamino)methylideneamino]imidazole-4-carboxamide = 5-[(5-phospho-1-deoxy-D-ribulos-1-ylimino)methylamino]-1-(5-phospho-beta-D-ribosyl)imidazole-4-carboxamide. The protein operates within amino-acid biosynthesis; L-histidine biosynthesis; L-histidine from 5-phospho-alpha-D-ribose 1-diphosphate: step 4/9. This chain is 1-(5-phosphoribosyl)-5-[(5-phosphoribosylamino)methylideneamino] imidazole-4-carboxamide isomerase, found in Geobacter sulfurreducens (strain ATCC 51573 / DSM 12127 / PCA).